The sequence spans 152 residues: Nucleoside diphosphate kinase (152 aa).

ATP-binding residues include Lys-11, Phe-59, Arg-87, Thr-93, Arg-104, and Asn-114. His-117 functions as the Pros-phosphohistidine intermediate in the catalytic mechanism.

Belongs to the NDK family. As to quaternary structure, homotetramer. It depends on Mg(2+) as a cofactor.

The protein localises to the cytoplasm. The catalysed reaction is a 2'-deoxyribonucleoside 5'-diphosphate + ATP = a 2'-deoxyribonucleoside 5'-triphosphate + ADP. The enzyme catalyses a ribonucleoside 5'-diphosphate + ATP = a ribonucleoside 5'-triphosphate + ADP. In terms of biological role, major role in the synthesis of nucleoside triphosphates other than ATP. The ATP gamma phosphate is transferred to the NDP beta phosphate via a ping-pong mechanism, using a phosphorylated active-site intermediate. The protein is Nucleoside diphosphate kinase of Prochlorococcus marinus (strain MIT 9303).